The chain runs to 462 residues: UDP-N-acetylmuramate--L-alanine ligase (462 aa).

116–122 provides a ligand contact to ATP; the sequence is GAHGKTT.

The protein belongs to the MurCDEF family.

It localises to the cytoplasm. It carries out the reaction UDP-N-acetyl-alpha-D-muramate + L-alanine + ATP = UDP-N-acetyl-alpha-D-muramoyl-L-alanine + ADP + phosphate + H(+). It functions in the pathway cell wall biogenesis; peptidoglycan biosynthesis. Functionally, cell wall formation. This Desulforamulus reducens (strain ATCC BAA-1160 / DSM 100696 / MI-1) (Desulfotomaculum reducens) protein is UDP-N-acetylmuramate--L-alanine ligase.